The chain runs to 319 residues: 7,8-didemethyl-8-hydroxy-5-deazariboflavin synthase (319 aa).

Residues 6–236 form the Radical SAM core domain; that stretch reads VTYSPAFTLV…AEITIQIPPN (231 aa). The [4Fe-4S] cluster site is built by cysteine 20, cysteine 24, and cysteine 27.

This sequence belongs to the radical SAM superfamily. CofG family. In terms of assembly, consists of two subunits, CofG and CofH. It depends on [4Fe-4S] cluster as a cofactor.

The catalysed reaction is 5-amino-5-(4-hydroxybenzyl)-6-(D-ribitylimino)-5,6-dihydrouracil + S-adenosyl-L-methionine = 7,8-didemethyl-8-hydroxy-5-deazariboflavin + 5'-deoxyadenosine + L-methionine + NH4(+) + H(+). Its pathway is cofactor biosynthesis; coenzyme F0 biosynthesis. Its function is as follows. Catalyzes the radical-mediated synthesis of 7,8-didemethyl-8-hydroxy-5-deazariboflavin from 5-amino-5-(4-hydroxybenzyl)-6-(D-ribitylimino)-5,6-dihydrouracil. This is 7,8-didemethyl-8-hydroxy-5-deazariboflavin synthase from Gloeobacter violaceus (strain ATCC 29082 / PCC 7421).